A 285-amino-acid polypeptide reads, in one-letter code: HTH-type transcriptional regulator MurR (285 aa).

The HTH rpiR-type domain occupies 1–77 (MLYLTKISNA…MALIGEYSAS (77 aa)). Positions 37-56 (SRQMAKQLGISQSSIVKFAQ) form a DNA-binding region, H-T-H motif. The region spanning 128–268 (IIEVISKAPF…FVGLVQLNDV (141 aa)) is the SIS domain.

Homotetramer.

Its pathway is amino-sugar metabolism; N-acetylmuramate degradation [regulation]. In terms of biological role, represses the expression of the murPQ operon involved in the uptake and degradation of N-acetylmuramic acid (MurNAc). Binds to two adjacent inverted repeats within the operator region. MurNAc 6-phosphate, the substrate of MurQ, is the specific inducer that weakens binding of MurR to the operator. The polypeptide is HTH-type transcriptional regulator MurR (Escherichia coli (strain K12 / MC4100 / BW2952)).